The primary structure comprises 230 residues: Small ribosomal subunit protein uS3 (230 aa).

The region spanning 39–107 (VRKFLVEKLQ…PAQINIAEIR (69 aa)) is the KH type-2 domain.

The protein belongs to the universal ribosomal protein uS3 family. As to quaternary structure, part of the 30S ribosomal subunit. Forms a tight complex with proteins S10 and S14.

Functionally, binds the lower part of the 30S subunit head. Binds mRNA in the 70S ribosome, positioning it for translation. The chain is Small ribosomal subunit protein uS3 from Shewanella putrefaciens (strain CN-32 / ATCC BAA-453).